The sequence spans 193 residues: MVTTNEPNIYETGVLDSNAEGNFVYTTLDAAINWIRKNSLWPMPMGLSCCAIEFMAVACSRYDLSRFGSEVTRFSPRQADVMIVAGTVTYKMALAVRRIWDQMPEPKWCIAMGACASTGGMFRSYSVLQGVDKILPVDVYISGCPPRPEAILEALLTLRKKLDTQQPARTFFKKEEPREANAPVPVNTEMPLE.

4 residues coordinate [4Fe-4S] cluster: C49, C50, C115, and C144. Residues 172 to 193 (FKKEEPREANAPVPVNTEMPLE) form a disordered region.

This sequence belongs to the complex I 20 kDa subunit family. NDH-1 is composed of 14 different subunits. Subunits NuoB, C, D, E, F, and G constitute the peripheral sector of the complex. [4Fe-4S] cluster serves as cofactor.

It localises to the cell inner membrane. The catalysed reaction is a quinone + NADH + 5 H(+)(in) = a quinol + NAD(+) + 4 H(+)(out). In terms of biological role, NDH-1 shuttles electrons from NADH, via FMN and iron-sulfur (Fe-S) centers, to quinones in the respiratory chain. The immediate electron acceptor for the enzyme in this species is believed to be ubiquinone. Couples the redox reaction to proton translocation (for every two electrons transferred, four hydrogen ions are translocated across the cytoplasmic membrane), and thus conserves the redox energy in a proton gradient. The protein is NADH-quinone oxidoreductase subunit B of Akkermansia muciniphila (strain ATCC BAA-835 / DSM 22959 / JCM 33894 / BCRC 81048 / CCUG 64013 / CIP 107961 / Muc).